The sequence spans 389 residues: MTTSVCLLGASGSVGESTLKVLRAHPEKFRLHSFSVHSNLEKAKEIQKEFSPDFICVSSDFADVGVLGNKLGRTQILYGESSLCELVREPEVEIVITAIVGSVGLRPTIAAITAGKRLGIANKETLVTSGPLIQSLIAKHNTKVVPVDSEHNALFQLLESLNPNSVEKIILTASGGAFRDLPVEQLSSVTKEQALHHPTWNMGPKITIDSNGMINKGLEVIEAHFLFNVPYDKIGVVIHPQSIAHGIVELKDGASFLYASYPDMIFPIAHSLFHPEPVPKVLRSYPAKDWGKLEFREPDFKRYPGLGLAFEAGKVGGTAPCIFNAANEAAVELFLKDEIRFIEIPDYIRETLDEIKIEFPLSLEEYEEADRIARETVRNLKARKVVSAC.

6 residues coordinate NADPH: serine 11, glycine 12, serine 13, valine 14, asparagine 39, and asparagine 122. Lysine 123 is a 1-deoxy-D-xylulose 5-phosphate binding site. Residue glutamate 124 coordinates NADPH. Aspartate 148 lines the Mn(2+) pocket. 1-deoxy-D-xylulose 5-phosphate is bound by residues serine 149, glutamate 150, serine 174, and histidine 197. Glutamate 150 contacts Mn(2+). Glycine 203 lines the NADPH pocket. Positions 210, 215, 216, and 219 each coordinate 1-deoxy-D-xylulose 5-phosphate. Glutamate 219 serves as a coordination point for Mn(2+).

Belongs to the DXR family. It depends on Mg(2+) as a cofactor. Mn(2+) serves as cofactor.

The enzyme catalyses 2-C-methyl-D-erythritol 4-phosphate + NADP(+) = 1-deoxy-D-xylulose 5-phosphate + NADPH + H(+). Its pathway is isoprenoid biosynthesis; isopentenyl diphosphate biosynthesis via DXP pathway; isopentenyl diphosphate from 1-deoxy-D-xylulose 5-phosphate: step 1/6. In terms of biological role, catalyzes the NADPH-dependent rearrangement and reduction of 1-deoxy-D-xylulose-5-phosphate (DXP) to 2-C-methyl-D-erythritol 4-phosphate (MEP). This chain is 1-deoxy-D-xylulose 5-phosphate reductoisomerase, found in Leptospira interrogans serogroup Icterohaemorrhagiae serovar Lai (strain 56601).